The chain runs to 336 residues: Ketol-acid reductoisomerase (NADP(+)) 1 (336 aa).

The region spanning 2 to 181 (AKVYYEKDVT…GATRAGVLET (180 aa)) is the KARI N-terminal Rossmann domain. NADP(+)-binding positions include 25-28 (YGSQ), Arg48, Ser52, and 82-85 (DELQ). His107 is an active-site residue. An NADP(+)-binding site is contributed by Gly133. Residues 182 to 327 (TFKEETETDL…RKLRGMMPFV (146 aa)) form the KARI C-terminal knotted domain. Mg(2+)-binding residues include Asp190, Glu194, Glu226, and Glu230. Ser251 serves as a coordination point for substrate.

This sequence belongs to the ketol-acid reductoisomerase family. Mg(2+) is required as a cofactor.

It catalyses the reaction (2R)-2,3-dihydroxy-3-methylbutanoate + NADP(+) = (2S)-2-acetolactate + NADPH + H(+). It carries out the reaction (2R,3R)-2,3-dihydroxy-3-methylpentanoate + NADP(+) = (S)-2-ethyl-2-hydroxy-3-oxobutanoate + NADPH + H(+). It functions in the pathway amino-acid biosynthesis; L-isoleucine biosynthesis; L-isoleucine from 2-oxobutanoate: step 2/4. Its pathway is amino-acid biosynthesis; L-valine biosynthesis; L-valine from pyruvate: step 2/4. Functionally, involved in the biosynthesis of branched-chain amino acids (BCAA). Catalyzes an alkyl-migration followed by a ketol-acid reduction of (S)-2-acetolactate (S2AL) to yield (R)-2,3-dihydroxy-isovalerate. In the isomerase reaction, S2AL is rearranged via a Mg-dependent methyl migration to produce 3-hydroxy-3-methyl-2-ketobutyrate (HMKB). In the reductase reaction, this 2-ketoacid undergoes a metal-dependent reduction by NADPH to yield (R)-2,3-dihydroxy-isovalerate. The polypeptide is Ketol-acid reductoisomerase (NADP(+)) 1 (Bacillus anthracis).